The sequence spans 473 residues: Rifampicin monooxygenase (473 aa).

Residues Thr12, Glu31, Lys32, and Arg41 each coordinate FAD. Arg43 provides a ligand contact to rifampicin. Positions 98, 122, and 156 each coordinate FAD. Rifampicin is bound at residue Arg196. Asp276 contributes to the FAD binding site. Gly285 is a rifampicin binding site. Positions 289 and 290 each coordinate FAD.

The protein belongs to the rifampicin monooxygenase family. As to quaternary structure, homodimer. FAD serves as cofactor.

It carries out the reaction rifampicin + NADPH + O2 = rifampicin para-naphthoquinone carboxamide + NADP(+) + H2O + H(+). The catalysed reaction is rifampicin + NADH + O2 = rifampicin para-naphthoquinone carboxamide + NAD(+) + H2O + H(+). In terms of biological role, monooxygenase that can modify rifampicin, thereby inactivating its antibiotic activity. It constitutes a secondary rifampicin resistance factor. The protein is Rifampicin monooxygenase of Nocardia farcinica (strain IFM 10152).